A 131-amino-acid polypeptide reads, in one-letter code: Large ribosomal subunit protein bL17 (131 aa).

The protein belongs to the bacterial ribosomal protein bL17 family. In terms of assembly, part of the 50S ribosomal subunit. Contacts protein L32.

This Burkholderia mallei (strain NCTC 10229) protein is Large ribosomal subunit protein bL17.